A 286-amino-acid chain; its full sequence is Bifunctional protein FolD (286 aa).

NADP(+) is bound by residues 167-169 (GRS) and Ile233.

This sequence belongs to the tetrahydrofolate dehydrogenase/cyclohydrolase family. Homodimer.

It carries out the reaction (6R)-5,10-methylene-5,6,7,8-tetrahydrofolate + NADP(+) = (6R)-5,10-methenyltetrahydrofolate + NADPH. The enzyme catalyses (6R)-5,10-methenyltetrahydrofolate + H2O = (6R)-10-formyltetrahydrofolate + H(+). It participates in one-carbon metabolism; tetrahydrofolate interconversion. Its function is as follows. Catalyzes the oxidation of 5,10-methylenetetrahydrofolate to 5,10-methenyltetrahydrofolate and then the hydrolysis of 5,10-methenyltetrahydrofolate to 10-formyltetrahydrofolate. The protein is Bifunctional protein FolD of Limosilactobacillus reuteri (strain DSM 20016) (Lactobacillus reuteri).